We begin with the raw amino-acid sequence, 353 residues long: Photosystem II D2 protein (353 aa).

An N-acetylthreonine modification is found at threonine 2. Threonine 2 carries the phosphothreonine modification. A helical membrane pass occupies residues 41 to 61 (CAYFALGGWFTGTTFVTSWYT). Histidine 118 is a chlorophyll a binding site. Residues 125 to 141 (GFMLRQFELARSVQLRP) traverse the membrane as a helical segment. Positions 130 and 143 each coordinate pheophytin a. Residues 153-166 (VFVSVFLIYPLGQS) traverse the membrane as a helical segment. Histidine 198 provides a ligand contact to chlorophyll a. Residues 208–228 (AALLCAIHGATVENTLFEDGD) traverse the membrane as a helical segment. Residues histidine 215 and phenylalanine 262 each contribute to the a plastoquinone site. Histidine 215 lines the Fe cation pocket. Residue histidine 269 participates in Fe cation binding. The chain crosses the membrane as a helical span at residues 279–295 (GLWMSALGVVGLALNLR).

It belongs to the reaction center PufL/M/PsbA/D family. PSII is composed of 1 copy each of membrane proteins PsbA, PsbB, PsbC, PsbD, PsbE, PsbF, PsbH, PsbI, PsbJ, PsbK, PsbL, PsbM, PsbT, PsbX, PsbY, PsbZ, Psb30/Ycf12, at least 3 peripheral proteins of the oxygen-evolving complex and a large number of cofactors. It forms dimeric complexes. The cofactor is The D1/D2 heterodimer binds P680, chlorophylls that are the primary electron donor of PSII, and subsequent electron acceptors. It shares a non-heme iron and each subunit binds pheophytin, quinone, additional chlorophylls, carotenoids and lipids. There is also a Cl(-1) ion associated with D1 and D2, which is required for oxygen evolution. The PSII complex binds additional chlorophylls, carotenoids and specific lipids..

It localises to the plastid. The protein resides in the chloroplast thylakoid membrane. It catalyses the reaction 2 a plastoquinone + 4 hnu + 2 H2O = 2 a plastoquinol + O2. Photosystem II (PSII) is a light-driven water:plastoquinone oxidoreductase that uses light energy to abstract electrons from H(2)O, generating O(2) and a proton gradient subsequently used for ATP formation. It consists of a core antenna complex that captures photons, and an electron transfer chain that converts photonic excitation into a charge separation. The D1/D2 (PsbA/PsbD) reaction center heterodimer binds P680, the primary electron donor of PSII as well as several subsequent electron acceptors. D2 is needed for assembly of a stable PSII complex. The polypeptide is Photosystem II D2 protein (Populus trichocarpa (Western balsam poplar)).